Consider the following 397-residue polypeptide: MVIILRHVRVFNGVNECDIYLIGTAHVSKDSIEEVEKIISSVSPEGIAVELDDRRFFSLITNEEKKVDLKKVLKEGNFLKFFIYLILANSQKKIGESFGIKPGSEMKKAIEIASKYGLPIYLIDRDIDITLSRLMDRMTFKEKMKIFWELLNSDEEDLELDDDLLNDMVKNPEKFIKLLKEISPTIYEVLVDERDRFMAKRLFELSKNKNSLVAVVGAGHVEGIVRYLKKLENGNDIDLMELIKVKKRKKSLKKLLTYGISLTIISIFLYMICYALNNPELLKMITFQWILFTGGLSALGVLLARGKLITALVAFLSAPITTLVPLPLAAVGTIAGLVELKYREITDKDLVGIINAESIKELLNNNLFRVLLVATLSNLGASIGVFYCLGKFIGFLG.

Helical transmembrane passes span 255 to 275, 284 to 304, 308 to 328, and 370 to 390; these read LLTY…ICYA, MITF…VLLA, LITA…PLPL, and VLLV…YCLG.

The protein resides in the cell membrane. This is an uncharacterized protein from Methanocaldococcus jannaschii (strain ATCC 43067 / DSM 2661 / JAL-1 / JCM 10045 / NBRC 100440) (Methanococcus jannaschii).